A 215-amino-acid polypeptide reads, in one-letter code: Large ribosomal subunit protein uL1 (215 aa).

This sequence belongs to the universal ribosomal protein uL1 family. Part of the 50S ribosomal subunit.

Functionally, binds directly to 23S rRNA. Probably involved in E site tRNA release. In terms of biological role, protein L1 is also a translational repressor protein, it controls the translation of its operon by binding to its mRNA. The protein is Large ribosomal subunit protein uL1 of Staphylothermus marinus (strain ATCC 43588 / DSM 3639 / JCM 9404 / F1).